A 409-amino-acid chain; its full sequence is Protein PHOSPHATE STARVATION RESPONSE 1 (409 aa).

Residues 1 to 15 (MEARPVHRSGSRDLT) are compositionally biased toward basic and acidic residues. Disordered regions lie at residues 1–42 (MEAR…NSQL), 86–108 (EKQQ…NNDS), and 178–226 (ETNS…TGKA). Composition is skewed to polar residues over residues 16 to 26 (RTSSIPSTQKP) and 90 to 108 (HYTG…NNDS). Positions 192–224 (QIPQPQIVQQQPSPSVELRPVSTTSSNSNNGTG) are enriched in low complexity. The HTH myb-type domain maps to 222 to 282 (GTGKARMRWT…HLQKYRTARY (61 aa)). The segment at residues 253-278 (PKGVLKIMKVEGLTIYHVKSHLQKYR) is a DNA-binding region (H-T-H motif). Residues 314–334 (TEALRLQMEVQKQLHEQLEIQ) adopt a coiled-coil conformation. The LHEQLE signature appears at 327 to 332 (LHEQLE). Residues 358 to 370 (GLTKGTASTSDSA) are compositionally biased toward polar residues. Residues 358 to 409 (GLTKGTASTSDSAAKSEQEDKKTADSKEVPEEETRKCEELESPQPKRPKIDN) are disordered. Basic and acidic residues predominate over residues 371–396 (AKSEQEDKKTADSKEVPEEETRKCEE). Phosphoserine is present on Ser399.

The protein belongs to the MYB-CC family. Homodimers and heterodimers. Interacts with SPX1 in a Pi-dependent manner. Does not interact with PHL2 or PHL3. Sumoylated by SIZ1. Sumoylation controls phosphate deficiency responses.

The protein localises to the nucleus. Functionally, transcription factor involved in phosphate starvation signaling. Binds as a dimer to P1BS, an imperfect palindromic sequence 5'-GNATATNC-3', to promote the expression of inorganic phosphate (Pi) starvation-responsive genes. SPX1 is a competitive inhibitor of this DNA-binding. PHR1 binding to its targets is low Pi-dependent. Regulates the expression of miR399. Regulates the expression of IPS1 (At3g09922), a non-coding RNA that mimics the target of miR399 to block the cleavage of PHO2 under Pi-deficient conditions. Regulates lipid remodeling and triacylglycerol accumulation during phosphorus starvation. Required for the shoot-specific hypoxic response. Regulates FER1 expression upon phosphate starvation, linking iron and phosphate homeostasis. Contributes to the homeostasis of both sulfate and phosphate in plants under phosphate deficiency. Required for adaptation to high light and retaining functional photosynthesis during phosphate starvation. Involved in the coregulation of Zn and Pi homeostasis. The chain is Protein PHOSPHATE STARVATION RESPONSE 1 from Arabidopsis thaliana (Mouse-ear cress).